A 3987-amino-acid polypeptide reads, in one-letter code: Hybrid PKS-NRPS synthetase buaA (3987 aa).

A Ketosynthase family 3 (KS3) domain is found at asparagine 5–serine 438. Active-site for beta-ketoacyl synthase activity residues include cysteine 176, histidine 315, and histidine 358. Residues valine 546–serine 872 form a malonyl-CoA:ACP transacylase (MAT) domain region. Residues histidine 939 to alanine 1072 are N-terminal hotdog fold. Positions histidine 939 to serine 1240 constitute a PKS/mFAS DH domain. The dehydratase (DH) domain stretch occupies residues glutamate 940–threonine 1238. Histidine 970 acts as the Proton acceptor; for dehydratase activity in catalysis. The segment at methionine 1087–serine 1240 is C-terminal hotdog fold. The active-site Proton donor; for dehydratase activity is aspartate 1147. The tract at residues tyrosine 1399 to methionine 1583 is methyltransferase (MT) domain. The tract at residues threonine 2113 to glycine 2285 is ketoreductase (KR) domain. The Carrier 1 domain maps to arginine 2397–methionine 2473. O-(pantetheine 4'-phosphoryl)serine is present on serine 2433. The tract at residues alanine 2489–aspartate 2561 is disordered. Basic and acidic residues predominate over residues histidine 2514–glutamate 2525. Residues serine 2532–alanine 2550 are compositionally biased toward low complexity. Positions methionine 2582–glutamate 3001 are condensation (C) domain. Positions leucine 3042–alanine 3448 are adenylation (A) (KR) domain. The 81-residue stretch at alanine 3564–glutamine 3644 folds into the Carrier 2 domain. Position 3604 is an O-(pantetheine 4'-phosphoryl)serine (serine 3604). Residues threonine 3680–alanine 3916 are reductase (R) domain.

This sequence in the C-terminal section; belongs to the NRP synthetase family.

The protein operates within mycotoxin biosynthesis. Functionally, hybrid PKS-NRPS synthetase; part of the gene cluster that mediates the biosynthesis of burnettramic acids, an unusual class of bolaamphiphilic pyrrolizidinediones that display potent antibacterial, antifungal, and cytotoxic activities. The first step of the biosynthesis of burnettramic acids is the hydroxylation of proline by the proline hydroxylase buaE to generate 4-hydroxyproline. The PKS-NRPS buaA and trans-enoyl reductase buaC construct the highly reduced polyketide chain, and the condensation (C) domain of buaA then catalyzes the amide bond formation with the activated 4-hydroxyproline. This is followed by the R domain releasing the nascent polyketide-peptide directly via a Dieckmann condensation to afford a tetramic acid fused to the hydroxyproline, generating the bicyclic pyrrolidinedione moiety. The cytochrome P450 monooxygenases buaD and buaG are likely responsible for the multiple hydroxylations on the polyketide chain and its terminus, although in a heterologous context, buaD does not appear to be required. Therefore, while buaG may be a multifunctional cytochrome P450 monooxygenase, it cannot be ruled out that the two secondary alcohols on the polyketide chain could have an acetate origin. Finally, the glycosyltransferase buaB transfers beta-D-mannose to the aglycone burnettramic acid A to form burnettramic acid A. Burnettramic acid B is a minor cis-pyrrolizidine epimer of burnettramic acid A and it is likely that small amounts of it form naturally in acidic environments. This Petromyces alliaceus (Aspergillus alliaceus) protein is Hybrid PKS-NRPS synthetase buaA.